A 568-amino-acid polypeptide reads, in one-letter code: MVFTSPSWCQDILMPIPNNELVGEFVMRRGHGLNDVSEDSPSSVCAYTGKSYSIRDIRHNVKSLSKSLSQILGWDFNHGNPEDKVVAVCSLNSIDYVPLTWAIHRLGGICLLLHPTSSASELETLMRKANCKAVFTCKPLMAQCQAAFTAINGDPSNIFLVELPLPEEQPVKISNTTISQLIADGEGLPDLQPLDLQDFDSKERLAYFCPTSGTSGFLKIAKVSHANVMANILQCTTMDSYTTASQTDVTLGILPLSHAYGLLVQHFVTFRGDCIILHPKFDMQIALKSVQQYRIVRLYLVPTIIGALATNPILFKLFDLSSVKRVITGSASLPEQVSKAINQLCPEWEINPGYGLTESFVCMSWTSPNSQYPGSTGCLLPLVEARLLDADGSDITAHGQAGDLLVRSPSVMKEYLDDDLKRDVTFDSDGWLRTGDVATFKQNPKGDSHLFIVDRKKDIMKVKGIQVPPVEIEGHLVAHPAVDDAAVVAISDEDAGERPFAFVVRSQKVMTDIDEKSLKKDISGYIQSTLSEPYWLRQNIRFIDAIPKSHNGKALKFKLKQQLVTSSA.

Residues 211-219 (TSGTSGFLK), 352-357 (PGYGLT), D436, R455, and K553 each bind ATP. Residues 282–352 (DMQIALKSVQ…QLCPEWEINP (71 aa)) form an SBD1 region. Positions 353-415 (GYGLTESFVC…VRSPSVMKEY (63 aa)) are SBD2.

Belongs to the ATP-dependent AMP-binding enzyme family.

The protein operates within mycotoxin biosynthesis. Functionally, acyl-CoA ligase; part of the gene cluster that mediates the biosynthesis of pneumocandins, lipohexapeptides of the echinocandin family that prevent fungal cell wall formation by non-competitive inhibition of beta-1,3-glucan synthase. The 10,12-dimethylmyristoyl side chain is synthesized by the reducing polyketide synthase gloL/GLPKS4. The thioesterase gloN/GLHYD exclusively interacts with gloL/GLPKS4 to maintain turnover of the polyketide side chain. The 10R,12S-dimethylmyristic acid is then transferred to the first thiolation domain of the nonribosomal peptide synthetase gloA/GLNRPS4 by the acyl-AMP ligase gloD/GLligase, followed by its acylation to L-ornithine to trigger elongation of the cyclic hexapeptide. L-ornithine, 4R-hydroxyl-L-proline (generated from L-proline by the dioxygenase gloF/GLOXY2), 3S-hydroxyl-L-homotyrosine (generated by gloG/GLHtyB, gloH/GLHtyA, gloI/GLHtyC, gloJ/GLHtyD and hydroxylated at C-3 by the dioxygenase gloM/GLOXY1), 3R-hydroxyl-L-glutamine (generated from L-glutamine probably by the dioxygenase gloE/GLOXY3) and 3S-hydroxyl-L-proline (generated from L-proline by the dioxygenase gloF/GLOXY2 to yield pneumocandin B0), or 3S-hydroxyl-4S-methyl-L-proline (generated from L-leucine by the dioxygenase gloC/GLOXY4 to yield pneumocandin A0) are sequentially added to the growing chain. The last C domain of gloA/GLNRPS4 is proposed to be responsible for cyclization by condensation to form the peptide bond between L-ornithine and 3S-hydroxyl-4S-methyl-L-proline (for pneumocandin A0) or 3S-hydroxyl-L-proline (for pneumocandin B0). Finally, the subsequent C-4 hydroxylation of 3S-hydroxyl-L-homotyrosine and L-ornithine dihydroxylation at C-4 and C-5 are performed by the cytochrome P450 monooxygenases gloP/GLP450-1 and gloO/GLP450-2, respectively. The polypeptide is Acyl-CoA ligase gloD (Glarea lozoyensis (strain ATCC 20868 / MF5171)).